Consider the following 362-residue polypeptide: Prostaglandin E2 receptor EP2 subtype (362 aa).

Residues 1–24 (MDNFLNDSKLMEDCKSRQWLLSGE) are Extracellular-facing. Residue N6 is glycosylated (N-linked (GlcNAc...) asparagine). A helical transmembrane segment spans residues 25–48 (SPAISSVMFSAGVLGNLIALALLA). Residues 49-66 (RRWRGDTGCSAGSRTSIS) are Cytoplasmic-facing. A helical transmembrane segment spans residues 67–92 (LFHVLVTELVLTDLLGTCLISPVVLA). Topologically, residues 93-112 (SYSRNQTLVALAPESHACTY) are extracellular. An intrachain disulfide couples C110 to C188. A helical transmembrane segment spans residues 113–133 (FAFTMTFFSLATMLMLFAMAL). At 134 to 152 (ERYLSIGYPYFYRRHLSRR) the chain is on the cytoplasmic side. Residues 153-177 (GGLAVLPVIYGASLLFCSLPLLNYG) traverse the membrane as a helical segment. Topologically, residues 178–199 (EYVQYCPGTWCFIRHGRTAYLQ) are extracellular. The helical transmembrane segment at 200–224 (LYATMLLLLIVAVLACNISVILNLI) threads the bilayer. The Cytoplasmic portion of the chain corresponds to 225–262 (RMHRRSRRSRCGLSGSSLRGPGSRRRGERTSMAEETDH). The segment at 234 to 255 (RCGLSGSSLRGPGSRRRGERTS) is disordered. Residues 235–245 (CGLSGSSLRGP) show a composition bias toward low complexity. The helical transmembrane segment at 263-286 (LILLAIMTITFAICSLPFTIFAYM) threads the bilayer. The Extracellular segment spans residues 287-299 (DETSSLKEKWDLR). A helical membrane pass occupies residues 300–323 (ALRFLSVNSIIDPWVFAILRPPVL). Over 324–362 (RLMRSVLCCRTSLRTQEAQQTSCSTQSSASKQTDLCGQL) the chain is Cytoplasmic.

Belongs to the G-protein coupled receptor 1 family.

The protein resides in the cell membrane. Its function is as follows. Receptor for prostaglandin E2 (PGE2). The activity of this receptor is mediated by G(s) proteins that stimulate adenylate cyclase. The subsequent raise in intracellular cAMP is responsible for the relaxing effect of this receptor on smooth muscle. The polypeptide is Prostaglandin E2 receptor EP2 subtype (Ptger2) (Mus musculus (Mouse)).